A 480-amino-acid polypeptide reads, in one-letter code: Coronin-2B (480 aa).

WD repeat units lie at residues 29–77, 78–127, 128–170, 171–212, 213–259, 260–305, and 306–345; these read HCFD…GRIE, PNYP…RNMT, EALL…LDVG, EPVK…PRSG, RVLQ…EDLS, MPLI…TEKP, and YLSY…KLVT. The stretch at 436–479 forms a coiled coil; the sequence is NELLRMFFRQQDEIRRLKEELAQKDIRIRQLQLELKNLRNSPKN.

The protein belongs to the WD repeat coronin family. As to quaternary structure, binds to F-actin and to vinculin. Expressed predominantly in brain.

Its subcellular location is the cytoplasm. It localises to the cytoskeleton. Functionally, may play a role in the reorganization of neuronal actin structure. This Homo sapiens (Human) protein is Coronin-2B (CORO2B).